We begin with the raw amino-acid sequence, 3674 residues long: Dystrophin (3674 aa).

The tract at residues 1–236 (MSEVSSDERE…YVTSLFQVLP (236 aa)) is actin-binding. 2 Calponin-homology (CH) domains span residues 11-115 (DVQK…LHWQ) and 130-236 (TNSE…QVLP). Residues 59–68 (PKEKGSTRVH) are ANK2- and ANK-3 binding. A compositionally biased stretch (polar residues) spans 306–318 (SDPTRSPFPSQRL). A disordered region spans residues 306–325 (SDPTRSPFPSQRLESPEDKS). Spectrin repeat units lie at residues 335–443 (VNLD…NLHK), 444–552 (VLMD…LLQD), 555–663 (LKWQ…QISQ), 715–824 (EIRK…WLEY), 826–930 (NRII…ELQI), 939–1041 (RYQE…KLEE), 1044–1150 (AKLR…ALKG), 1153–1259 (DKTI…TLEE), 1262–1363 (ACWH…LLEQ), 1364–1459 (SIQS…LFQK), 1464–1564 (EQRL…QLEK), 1567–1672 (KLSR…LLLE), 1675–1774 (KHME…KASI), 1775–1870 (PLKE…KALE), 1873–1975 (HQWY…TVHE), 1988–2097 (EISY…KFDR), 2100–2204 (EKWR…RLEE), 2207–2314 (NILS…EIEA), 2315–2412 (HIKD…LRAK), 2464–2566 (FNRA…QLNE), 2569–2675 (KDST…VLEE), 2678–2791 (RLLQ…HLEA), 2797–2919 (KRLH…RKID), and 2924–3029 (RLQE…QLHE). The tract at residues 1411–1909 (SDLTSHEISL…PEPQDEKKIK (499 aa)) is interaction with SYNM. One can recognise a WW domain in the interval 3044–3077 (TSVQGPWERAISPNKVPYYINHETQTTCWDHPKM). Residues 3047-3397 (QGPWERAISP…TVLEGDNMET (351 aa)) form an interaction with SYNM region. The ZZ-type; degenerate zinc finger occupies 3297–3353 (KHQAKCNICKECPIIGFRYRSLKHFNYDICQSCFFSGRVAKGHKMHYPMVEYCTPTT). Zn(2+) is bound by residues Cys-3302, Cys-3305, Cys-3326, and Cys-3329. The interval 3455 to 3507 (DDEHLLIQHYCQSLNQDSPLSQPRSPAQILISLESEERGELERILADLEEENR) is binds to SNTB1. 3 positions are modified to phosphoserine: Ser-3472, Ser-3479, and Ser-3489. Disordered regions lie at residues 3517-3543 (KQQHEHKGLSPLPSPPEMMPTSPQSPR) and 3590-3674 (QAEA…EDTM). Polar residues-rich tracts occupy residues 3596–3615 (NGTTVSSPSTSLQRSDSSQP) and 3651–3662 (QLNNSFPSSRGR). Ser-3601, Ser-3602, Ser-3606, Ser-3612, Ser-3613, and Ser-3655 each carry phosphoserine.

In terms of assembly, interacts with SYNM. Interacts with the syntrophins SNTG1 and SNTG2. Interacts with KRT19. Component of the dystrophin-associated glycoprotein complex which is composed of three subcomplexes: a cytoplasmic complex comprised of DMD (or UTRN), DTNA and a number of syntrophins, such as SNTB1, SNTB2, SNTG1 and SNTG2, the transmembrane dystroglycan complex, and the sarcoglycan-sarcospan complex. Interacts with DAG1 (betaDAG1) with DMD; the interaction is inhibited by phosphorylation on the PPXY motif of DAG1. Interacts with SYNM; SNTA1 and SNTB1. Interacts with CMYA5. Directly interacts with ANK2 and ANK3; these interactions do not interfere with betaDAG1-binding and are necessary for proper localization in muscle cells. Identified in a dystroglycan complex that contains at least PRX, DRP2, UTRN, DMD and DAG1. Interacts with DTNB. Interacts with PGM5; the interaction is direct. Interacts with NOS1; localizes NOS1 to sarcolemma in muscle cells. In the retina, expressed in the outer plexiform layer (OPL) and around the blood vessels. Also observed at the vitreal border of the retina corresponding to the inner limiting membrane (ILM). Presynaptically localized in cone pedicles and postsynaptically in bipolar cells (at protein level).

It localises to the cell membrane. Its subcellular location is the sarcolemma. The protein localises to the cytoplasm. The protein resides in the cytoskeleton. It is found in the postsynaptic cell membrane. In terms of biological role, anchors the extracellular matrix to the cytoskeleton via F-actin. Ligand for dystroglycan. Component of the dystrophin-associated glycoprotein complex which accumulates at the neuromuscular junction (NMJ) and at a variety of synapses in the peripheral and central nervous systems and has a structural function in stabilizing the sarcolemma. Also implicated in signaling events and synaptic transmission. This Sus scrofa (Pig) protein is Dystrophin.